The chain runs to 397 residues: Flavohemoprotein (397 aa).

The Globin domain occupies 4-140 (SFSPHTITLI…IANLLKDREA (137 aa)). H87 lines the heme b pocket. Residues Y97 and E139 each act as charge relay system in the active site. A reductase region spans residues 151-397 (GGWIHWRRFV…FGPMDEEMAA (247 aa)). An FAD-binding FR-type domain is found at 154–258 (IHWRRFVISK…TPPVGDFFLP (105 aa)). Residues Y192 and 207–210 (RNYS) each bind FAD. 271 to 276 (GVGLTP) provides a ligand contact to NADP(+). 387-390 (FFGP) provides a ligand contact to FAD.

This sequence belongs to the globin family. Two-domain flavohemoproteins subfamily. The protein in the C-terminal section; belongs to the flavoprotein pyridine nucleotide cytochrome reductase family. Heme b is required as a cofactor. The cofactor is FAD.

The catalysed reaction is 2 nitric oxide + NADPH + 2 O2 = 2 nitrate + NADP(+) + H(+). The enzyme catalyses 2 nitric oxide + NADH + 2 O2 = 2 nitrate + NAD(+) + H(+). Functionally, is involved in NO detoxification in an aerobic process, termed nitric oxide dioxygenase (NOD) reaction that utilizes O(2) and NAD(P)H to convert NO to nitrate, which protects the bacterium from various noxious nitrogen compounds. Therefore, plays a central role in the inducible response to nitrosative stress. The sequence is that of Flavohemoprotein from Xylella fastidiosa (strain Temecula1 / ATCC 700964).